We begin with the raw amino-acid sequence, 448 residues long: Packaging protein 1 (448 aa).

The segment at 1 to 76 (METKGRRSAA…SQPAKRGGLL (76 aa)) is disordered. Over residues 22–31 (PRKRPTRRAP) the composition is skewed to basic residues. Residues 56-67 (RPSSDSLLQEPS) are compositionally biased toward polar residues. 171–178 (GPTGCGKS) contacts ATP. The interval 440-448 (RAYRARKIK) is DNA-binding.

It belongs to the adenoviridae packaging protein 1 family. Homodimer. Part of a genome packaging complex composed of packaging proteins 1, 2 and 3; this complex specifically binds to the packaging sequence on the left end of viral genomic DNA and performs packaging of the viral genome. Interacts with protein 33K.

It is found in the virion. It localises to the host nucleus. Its subcellular location is the host nucleoplasm. The protein resides in the host nucleolus. In terms of biological role, component of the packaging machinery which encapsidates the viral DNA into preformed capsids and transcriptional activator of the viral major late promoter (MLP). Binds, along with packaging proteins 2 and 3, to the specific packaging sequence on the left end of viral genomic DNA and displays ATPase activity thereby providing the power stroke of the packaging machinery. The activity of packaging protein IVa2 is stimulated by protein 33K which acts as a terminase. May be the protein that pumps DNA into the capsid powered by ATP hydrolysis. Specifically binds to the 5'-CG-3' nucleotides of the repeats making up the packaging sequence. Component of the DEF-A and DEF-B transcription factors that bind downstream elements of the major late promoter (MLP), and stimulate transcription from the MLP after initiation of viral DNA replication. DEF-A is a heterodimer packaging proteins 1 and 2 and DEF-B is a homodimer of packaging protein 1. This Human adenovirus B serotype 7 (HAdV-7) protein is Packaging protein 1.